The sequence spans 654 residues: Translation factor GUF1, mitochondrial (654 aa).

The region spanning 57–237 (ENYRNFSIVA…SVIKNIPSPV (181 aa)) is the tr-type G domain. GTP-binding positions include 66 to 73 (AHVDHGKS), 130 to 134 (DTPGH), and 184 to 187 (NKID).

It belongs to the TRAFAC class translation factor GTPase superfamily. Classic translation factor GTPase family. LepA subfamily.

Its subcellular location is the mitochondrion inner membrane. The enzyme catalyses GTP + H2O = GDP + phosphate + H(+). In terms of biological role, promotes mitochondrial protein synthesis. May act as a fidelity factor of the translation reaction, by catalyzing a one-codon backward translocation of tRNAs on improperly translocated ribosomes. Binds to mitochondrial ribosomes in a GTP-dependent manner. The sequence is that of Translation factor GUF1, mitochondrial from Candida dubliniensis (strain CD36 / ATCC MYA-646 / CBS 7987 / NCPF 3949 / NRRL Y-17841) (Yeast).